We begin with the raw amino-acid sequence, 360 residues long: Phenylalanine--tRNA ligase alpha subunit (360 aa).

Mg(2+) is bound at residue Glu260.

It belongs to the class-II aminoacyl-tRNA synthetase family. Phe-tRNA synthetase alpha subunit type 1 subfamily. As to quaternary structure, tetramer of two alpha and two beta subunits. Requires Mg(2+) as cofactor.

The protein resides in the cytoplasm. The catalysed reaction is tRNA(Phe) + L-phenylalanine + ATP = L-phenylalanyl-tRNA(Phe) + AMP + diphosphate + H(+). The sequence is that of Phenylalanine--tRNA ligase alpha subunit from Sinorhizobium medicae (strain WSM419) (Ensifer medicae).